Consider the following 612-residue polypeptide: UvrABC system protein C (612 aa).

The 79-residue stretch at 21–99 (HQPGVYRMYD…IKKYRPRYNV (79 aa)) folds into the GIY-YIG domain. Positions 208-243 (QQVIDELMNKMEQASTDLDFERAARFRDQIAALRKT) constitute a UVR domain.

The protein belongs to the UvrC family. As to quaternary structure, interacts with UvrB in an incision complex.

The protein localises to the cytoplasm. In terms of biological role, the UvrABC repair system catalyzes the recognition and processing of DNA lesions. UvrC both incises the 5' and 3' sides of the lesion. The N-terminal half is responsible for the 3' incision and the C-terminal half is responsible for the 5' incision. This chain is UvrABC system protein C, found in Idiomarina loihiensis (strain ATCC BAA-735 / DSM 15497 / L2-TR).